Reading from the N-terminus, the 513-residue chain is ATP synthase subunit alpha (513 aa).

An ATP-binding site is contributed by 169 to 176 (GDRQTGKT).

This sequence belongs to the ATPase alpha/beta chains family. In terms of assembly, F-type ATPases have 2 components, CF(1) - the catalytic core - and CF(0) - the membrane proton channel. CF(1) has five subunits: alpha(3), beta(3), gamma(1), delta(1), epsilon(1). CF(0) has three main subunits: a(1), b(2) and c(9-12). The alpha and beta chains form an alternating ring which encloses part of the gamma chain. CF(1) is attached to CF(0) by a central stalk formed by the gamma and epsilon chains, while a peripheral stalk is formed by the delta and b chains.

It localises to the cell inner membrane. The enzyme catalyses ATP + H2O + 4 H(+)(in) = ADP + phosphate + 5 H(+)(out). Functionally, produces ATP from ADP in the presence of a proton gradient across the membrane. The alpha chain is a regulatory subunit. In Pseudoalteromonas translucida (strain TAC 125), this protein is ATP synthase subunit alpha.